We begin with the raw amino-acid sequence, 1679 residues long: [F-actin]-monooxygenase mical2b (1679 aa).

Residues 2–494 form a monooxygenase domain region; the sequence is GETEEERTSQ…RHLFISGEQD (493 aa). FAD-binding positions include C97, 97 to 125, E116, R118, R123, N125, and D398; that span reads CGFRTAIELALLGAKVVVIEKRDTFSRNN. The Calponin-homology (CH) domain occupies 516–619; that stretch reads EVRPGRLLLW…MVLYLSKFYE (104 aa). A Nuclear localization signal motif is present at residues 658-679; it reads RKRIPKLDKKLEESDVNRKRKK. Disordered regions lie at residues 661–772, 818–838, 874–907, 1073–1163, 1194–1247, 1259–1283, 1302–1342, and 1473–1509; these read IPKL…KAKW, SAYKSSERRPRSPLIPFTPTL, SSLFTGNPAQPQTDESSPAVSPSSPPQTIPESST, STRH…RSTA, KPED…DEIP, EYPKPSSSSPEPIVTSISSDPISFS, DLTN…PAPP, and RNKASAQQQQQQKSNSSSEDEQEPKLTHSGALQKKKE. 2 stretches are compositionally biased toward basic and acidic residues: residues 662–674 and 697–707; these read PKLDKKLEESDVN and GEREEQKENKV. A compositionally biased stretch (polar residues) spans 874–888; sequence SSLFTGNPAQPQTDE. The 63-residue stretch at 1011-1073 folds into the LIM zinc-binding domain; the sequence is DTCVFCQKRV…KMHFSQRKTS (63 aa). Residues 1086-1099 are compositionally biased toward low complexity; it reads IRSSSITISNHTST. Positions 1112 to 1123 are enriched in polar residues; sequence DSSTQQDLQTLP. Residues 1133–1143 show a composition bias toward basic and acidic residues; sequence EVKDSSKKADP. A compositionally biased stretch (low complexity) spans 1144-1154; it reads ADSAPACPDSP. Residues 1202-1211 show a composition bias toward acidic residues; it reads LAEEDGNSDF. Polar residues predominate over residues 1220–1242; the sequence is SKKPSNPSTDSNCLPTKDNSSTP. Over residues 1259 to 1270 the composition is skewed to low complexity; sequence EYPKPSSSSPEP. Residues 1302-1325 show a composition bias toward polar residues; that stretch reads DLTNPGKSGAEEQQQQHVKPSISL. The segment covering 1333–1342 has biased composition (pro residues); sequence THPQPEPAPP. Residues 1475 to 1489 show a composition bias toward low complexity; sequence KASAQQQQQQKSNSS. Residues 1517–1667 enclose the bMERB domain; sequence KSDELKRLHR…EKAEDRDLES (151 aa).

Belongs to the Mical family. The cofactor is FAD.

Its subcellular location is the nucleus. It localises to the cytoplasm. It carries out the reaction L-methionyl-[F-actin] + NADPH + O2 + H(+) = L-methionyl-(R)-S-oxide-[F-actin] + NADP(+) + H2O. In terms of biological role, nuclear monooxygenase that promotes depolymerization of F-actin by mediating oxidation of specific methionine residues on actin and regulates the srf signaling. Acts by modifying nuclear actin subunits through the addition of oxygen to form methionine-sulfoxide, leading to promote actin filament severing and prevent repolymerization. Acts as a key regulator of the srf signaling pathway elicited by nerve growth factor and serum: mediates oxidation and subsequent depolymerization of nuclear actin, leading to increase mkl1/mrtf-a presence in the nucleus and promote srf:mkl1/mrtf-a-dependent gene transcription. This Danio rerio (Zebrafish) protein is [F-actin]-monooxygenase mical2b.